The chain runs to 332 residues: Anthranilate phosphoribosyltransferase (332 aa).

Residues G79, 82–83, S87, 89–92, 107–115, and S119 each bind 5-phospho-alpha-D-ribose 1-diphosphate; these read GD, NIST, and KHGNRSVSS. Anthranilate is bound at residue G79. Mg(2+) is bound at residue S91. Residue N110 participates in anthranilate binding. Position 165 (R165) interacts with anthranilate. Residues D223 and E224 each contribute to the Mg(2+) site.

This sequence belongs to the anthranilate phosphoribosyltransferase family. Homodimer. Mg(2+) serves as cofactor.

It carries out the reaction N-(5-phospho-beta-D-ribosyl)anthranilate + diphosphate = 5-phospho-alpha-D-ribose 1-diphosphate + anthranilate. It participates in amino-acid biosynthesis; L-tryptophan biosynthesis; L-tryptophan from chorismate: step 2/5. Its function is as follows. Catalyzes the transfer of the phosphoribosyl group of 5-phosphorylribose-1-pyrophosphate (PRPP) to anthranilate to yield N-(5'-phosphoribosyl)-anthranilate (PRA). The sequence is that of Anthranilate phosphoribosyltransferase from Yersinia pseudotuberculosis serotype O:3 (strain YPIII).